The primary structure comprises 327 residues: Beta-ketoacyl-[acyl-carrier-protein] synthase III (327 aa).

Residues C112 and H253 contribute to the active site. The ACP-binding stretch occupies residues 254–258 (QANER). N283 is a catalytic residue.

The protein belongs to the thiolase-like superfamily. FabH family. In terms of assembly, homodimer.

The protein localises to the cytoplasm. It catalyses the reaction malonyl-[ACP] + acetyl-CoA + H(+) = 3-oxobutanoyl-[ACP] + CO2 + CoA. Its pathway is lipid metabolism; fatty acid biosynthesis. Functionally, catalyzes the condensation reaction of fatty acid synthesis by the addition to an acyl acceptor of two carbons from malonyl-ACP. Catalyzes the first condensation reaction which initiates fatty acid synthesis and may therefore play a role in governing the total rate of fatty acid production. Possesses both acetoacetyl-ACP synthase and acetyl transacylase activities. Its substrate specificity determines the biosynthesis of branched-chain and/or straight-chain of fatty acids. The protein is Beta-ketoacyl-[acyl-carrier-protein] synthase III of Chlamydia muridarum (strain MoPn / Nigg).